Here is a 495-residue protein sequence, read N- to C-terminus: Putative aldehyde dehydrogenase AldA (495 aa).

NAD(+) is bound at residue 212–218 (GKGSESG). Catalysis depends on residues glutamate 256 and cysteine 290.

The protein belongs to the aldehyde dehydrogenase family.

The catalysed reaction is an aldehyde + NAD(+) + H2O = a carboxylate + NADH + 2 H(+). This is Putative aldehyde dehydrogenase AldA (aldA) from Staphylococcus aureus (strain USA300).